A 129-amino-acid chain; its full sequence is Small ribosomal subunit protein uS8 (129 aa).

This sequence belongs to the universal ribosomal protein uS8 family. As to quaternary structure, part of the 30S ribosomal subunit.

In terms of biological role, one of the primary rRNA binding proteins, it binds directly to 16S rRNA central domain where it helps coordinate assembly of the platform of the 30S subunit. This chain is Small ribosomal subunit protein uS8, found in Thermoplasma acidophilum (strain ATCC 25905 / DSM 1728 / JCM 9062 / NBRC 15155 / AMRC-C165).